The primary structure comprises 203 residues: CASP-like protein 2U2 (203 aa).

Positions Met1–Ala21 are disordered. The Cytoplasmic portion of the chain corresponds to Met1–Gly27. The helical transmembrane segment at Ala28–Val48 threads the bilayer. Residues Lys49–Ser73 are Extracellular-facing. N-linked (GlcNAc...) asparagine glycosylation is present at Asn51. Residues Ala74–Leu94 traverse the membrane as a helical segment. At Ala95 to Lys108 the chain is on the cytoplasmic side. A helical transmembrane segment spans residues Leu109–Ala129. At Ala130–Arg163 the chain is on the extracellular side. The chain crosses the membrane as a helical span at residues Ala164–Ala184. The Cytoplasmic segment spans residues Gln185 to Ile203.

It belongs to the Casparian strip membrane proteins (CASP) family. As to quaternary structure, homodimer and heterodimers.

It is found in the cell membrane. In Osmunda lancea (Fern), this protein is CASP-like protein 2U2.